The primary structure comprises 197 residues: Adenylate kinase 1 (197 aa).

ATP is bound at residue 19–24 (GSGKGT). The interval 39-68 (SSGDLLRAEVQSGSPKGKELKAMMERGELV) is NMP. Residues S40, R45, 95–98 (GYPR), and Q102 contribute to the AMP site. An LID region spans residues 132 to 142 (KRAETSNRVDD). R133 provides a ligand contact to ATP. The AMP site is built by R139 and R150. ATP is bound at residue G178.

The protein belongs to the adenylate kinase family. AK1 subfamily. As to quaternary structure, monomer. Requires Mg(2+) as cofactor.

It is found in the cytoplasm. The catalysed reaction is AMP + ATP = 2 ADP. The protein operates within purine metabolism; purine nucleotide biosynthesis. Catalyzes the reversible transfer of the terminal phosphate group between ATP and AMP. Plays an important role in cellular energy homeostasis and in adenine nucleotide metabolism. This is Adenylate kinase 1 from Schistosoma mansoni (Blood fluke).